The following is a 352-amino-acid chain: Uroporphyrinogen decarboxylase (352 aa).

Substrate-binding positions include 27–31 (RQAGR), Asp77, Tyr154, Thr209, and His325.

Belongs to the uroporphyrinogen decarboxylase family. In terms of assembly, homodimer.

The protein resides in the cytoplasm. It catalyses the reaction uroporphyrinogen III + 4 H(+) = coproporphyrinogen III + 4 CO2. It functions in the pathway porphyrin-containing compound metabolism; protoporphyrin-IX biosynthesis; coproporphyrinogen-III from 5-aminolevulinate: step 4/4. Its function is as follows. Catalyzes the decarboxylation of four acetate groups of uroporphyrinogen-III to yield coproporphyrinogen-III. The chain is Uroporphyrinogen decarboxylase from Legionella pneumophila (strain Paris).